A 120-amino-acid polypeptide reads, in one-letter code: ATP-dependent Clp protease adapter protein ClpS (120 aa).

This sequence belongs to the ClpS family. As to quaternary structure, binds to the N-terminal domain of the chaperone ClpA.

In terms of biological role, involved in the modulation of the specificity of the ClpAP-mediated ATP-dependent protein degradation. The chain is ATP-dependent Clp protease adapter protein ClpS from Pseudomonas savastanoi pv. phaseolicola (strain 1448A / Race 6) (Pseudomonas syringae pv. phaseolicola (strain 1448A / Race 6)).